The chain runs to 336 residues: Dihydroorotate dehydrogenase (quinone) (336 aa).

Residues A62–K66 and T86 contribute to the FMN site. K66 is a binding site for substrate. N111 to F115 provides a ligand contact to substrate. N139 and N172 together coordinate FMN. N172 serves as a coordination point for substrate. S175 (nucleophile) is an active-site residue. N177 lines the substrate pocket. K217 and T245 together coordinate FMN. Residue N246–T247 participates in substrate binding. Residues G268, G297, and F318 to S319 each bind FMN.

It belongs to the dihydroorotate dehydrogenase family. Type 2 subfamily. In terms of assembly, monomer. The cofactor is FMN.

The protein localises to the cell membrane. It catalyses the reaction (S)-dihydroorotate + a quinone = orotate + a quinol. It functions in the pathway pyrimidine metabolism; UMP biosynthesis via de novo pathway; orotate from (S)-dihydroorotate (quinone route): step 1/1. Functionally, catalyzes the conversion of dihydroorotate to orotate with quinone as electron acceptor. The chain is Dihydroorotate dehydrogenase (quinone) from Photorhabdus laumondii subsp. laumondii (strain DSM 15139 / CIP 105565 / TT01) (Photorhabdus luminescens subsp. laumondii).